The following is a 322-amino-acid chain: tRNA dimethylallyltransferase (322 aa).

Position 19–26 (19–26 (GPTASGKT)) interacts with ATP. 21–26 (TASGKT) contacts substrate. Interaction with substrate tRNA regions lie at residues 44–47 (DSAL), 168–172 (QRIQR), and 255–260 (RCVGYR).

It belongs to the IPP transferase family. As to quaternary structure, monomer. The cofactor is Mg(2+).

The catalysed reaction is adenosine(37) in tRNA + dimethylallyl diphosphate = N(6)-dimethylallyladenosine(37) in tRNA + diphosphate. Its function is as follows. Catalyzes the transfer of a dimethylallyl group onto the adenine at position 37 in tRNAs that read codons beginning with uridine, leading to the formation of N6-(dimethylallyl)adenosine (i(6)A). In Cupriavidus necator (strain ATCC 17699 / DSM 428 / KCTC 22496 / NCIMB 10442 / H16 / Stanier 337) (Ralstonia eutropha), this protein is tRNA dimethylallyltransferase.